The following is a 640-amino-acid chain: MTISWRALSHFLIPQSDYGEAKTHLEQLQQTLTHLDHPHHHHAHHPHHHLGLYHGALPNTSTITTDSVVSCVSSTLPAVAKAISASSSCDGLQSERKKCPISDLDSGGHGHGQGHGLMEAICAGQKTSPIPPPPPPCCLTLGESSSSPNPIATAALMNASTSGSSSAGGASASLCNDLTRESSWYAHHHHHHHHHHHQLPDELVMYATPTPTPAIGKFGLDTSTEGYLNARYNVNVKGVRHDRTSSFFDIPAVTHPHNHPHPHPHPHPHPYCYRFPSSPPAGILKKSDEEATSAAVYCSDVSSGQHFPHHTKIEHADSTTTAAQQQQQQQEQQQQQQQQQQQQQHQQQLQQAAALHPHHHHSHHGHHGHQQAEQQALTHLTPLHAASAFKFSHTAVISSSAVYATPSHYAHQQQTQSQSVYRDLSPTTLAAVSDADLKYDSGPYNAAISSTYPSALRPNVVDSTTSSDAELRLDQFYASNGISTSSNGQAISQRRGSLQLWQFLVALLDEPTTSASCIAWTGRGMEFKLIEPEEVARRWGLQKNRPAMNYDKLSRSLRYYYEKGIMQKVNGERYVYRFVCDPDALFNMAYGHLTTGSGKGDQHQLTLSLAKTPPTSGDSQTQSPRVAKSEYYDTAALHKY.

Residues H315–Q375 form a disordered region. Positions T321–H356 form a coiled coil. Positions A322 to L355 are enriched in low complexity. Residues H356–H369 show a composition bias toward basic residues. Residues L498–V579 constitute a DNA-binding region (ETS). Residues L609–P624 show a composition bias toward polar residues. The segment at L609 to K628 is disordered.

This sequence belongs to the ETS family. As to expression, in the adult brain, expressed almost exclusively in dopaminergic neurons.

The protein localises to the nucleus. Functionally, required in dopaminergic neurons to regulate expression of genes involved in dopamine signaling. Decreases expression of the dopamine transporter DAT and increases expression of the dopamine transporter Vmat and the tyrosine 3-monooxygenase ple which is involved in dopamine biosynthesis. Also involved in negatively regulating the expression of a group of endoplasmic reticulum proteins, the molecular chaperone Calr and the protein disulfide isomerases CaBP1 and ERp60. The polypeptide is ETV5-related protein Ets96B (Drosophila melanogaster (Fruit fly)).